Reading from the N-terminus, the 329-residue chain is Fructose-1,6-bisphosphatase class 1 (329 aa).

Mg(2+)-binding residues include E84, D103, L105, and D106. Residues 106 to 109 (DGSS), N196, and K262 contribute to the substrate site. Residue E268 coordinates Mg(2+).

It belongs to the FBPase class 1 family. As to quaternary structure, homotetramer. Mg(2+) is required as a cofactor.

It localises to the cytoplasm. The enzyme catalyses beta-D-fructose 1,6-bisphosphate + H2O = beta-D-fructose 6-phosphate + phosphate. It participates in carbohydrate biosynthesis; gluconeogenesis. This is Fructose-1,6-bisphosphatase class 1 from Shewanella loihica (strain ATCC BAA-1088 / PV-4).